Consider the following 251-residue polypeptide: Phosphate import ATP-binding protein PstB 2 (251 aa).

One can recognise an ABC transporter domain in the interval 6–246; that stretch reads FNIENLDLFY…PRDDRTRGYV (241 aa). Position 38–45 (38–45) interacts with ATP; it reads GPSGCGKS.

The protein belongs to the ABC transporter superfamily. Phosphate importer (TC 3.A.1.7) family. The complex is composed of two ATP-binding proteins (PstB), two transmembrane proteins (PstC and PstA) and a solute-binding protein (PstS).

The protein resides in the cell inner membrane. The enzyme catalyses phosphate(out) + ATP + H2O = ADP + 2 phosphate(in) + H(+). In terms of biological role, part of the ABC transporter complex PstSACB involved in phosphate import. Responsible for energy coupling to the transport system. The protein is Phosphate import ATP-binding protein PstB 2 of Vibrio cholerae serotype O1 (strain ATCC 39315 / El Tor Inaba N16961).